Consider the following 239-residue polypeptide: Ubiquinone biosynthesis O-methyltransferase (239 aa).

Positions 44, 63, 84, and 128 each coordinate S-adenosyl-L-methionine.

This sequence belongs to the methyltransferase superfamily. UbiG/COQ3 family.

It carries out the reaction a 3-demethylubiquinol + S-adenosyl-L-methionine = a ubiquinol + S-adenosyl-L-homocysteine + H(+). It catalyses the reaction a 3-(all-trans-polyprenyl)benzene-1,2-diol + S-adenosyl-L-methionine = a 2-methoxy-6-(all-trans-polyprenyl)phenol + S-adenosyl-L-homocysteine + H(+). It functions in the pathway cofactor biosynthesis; ubiquinone biosynthesis. In terms of biological role, O-methyltransferase that catalyzes the 2 O-methylation steps in the ubiquinone biosynthetic pathway. This Xanthomonas axonopodis pv. citri (strain 306) protein is Ubiquinone biosynthesis O-methyltransferase.